Consider the following 101-residue polypeptide: Small ribosomal subunit protein uS10 (101 aa).

Belongs to the universal ribosomal protein uS10 family. Part of the 30S ribosomal subunit.

Involved in the binding of tRNA to the ribosomes. The sequence is that of Small ribosomal subunit protein uS10 from Mycobacterium leprae (strain Br4923).